The primary structure comprises 1848 residues: WD repeat-containing protein 90 (1848 aa).

The tract at residues 1-222 is binds with microtubules; sequence MAGVWQHPFV…ISPMPREMSF (222 aa). Disordered stretches follow at residues 257–278 and 316–336; these read MVTAPGAPMSRSPARERPRSVT and SVSARAEEARDLEDRSRGVEQ. Residues 320–335 show a composition bias toward basic and acidic residues; sequence RAEEARDLEDRSRGVE. WD repeat units lie at residues 436-479, 481-523, 530-570, 644-683, 685-724, 727-766, 769-808, 811-850, 955-993, and 998-1035; these read GHTD…AMFK, HVHS…RSGE, AHTD…LRSC, SSGPGIAINSLSVSATFCATGTEDGYLRLWPLDFSGVFLE, EHEGPVSCVAISPEGLRVLSCTSSGELGVLDVPSRGYNTL, SHTDTLLSFSCHPTHPQLVTVSSDNTIRIWDTGTLQQLYD, AEEETPCAVTFHPVRQAFACGFSSGTIRFFDITATALQAE, QHRGAITGLLFSPDGSLMYSCCSLGSVALYSIGHKEQHVL, VHKQCCSSLAVSMDTRYMLTAGDRLLKVWDQRQPGTVRP, and GHSEAVQQVDFSPDQQSVISAGDAVFIWDFLAAPDPEF. Disordered regions lie at residues 1053 to 1133 and 1151 to 1178; these read ALDP…VESD and LTGSKSNSSSLREGMVKSTHEPPRPDSY. Over residues 1102–1113 the composition is skewed to acidic residues; it reads SESDDGQEEEGN. 2 stretches are compositionally biased toward basic and acidic residues: residues 1114 to 1129 and 1164 to 1178; these read RDEQERTLVPDTRDNL and GMVKSTHEPPRPDSY. WD repeat units lie at residues 1252–1297, 1300–1341, 1343–1382, 1395–1433, 1435–1473, 1532–1571, 1574–1621, 1624–1663, 1670–1714, 1774–1813, and 1815–1848; these read GHPE…CMKI, HHRT…LLAT, RLFQPVHAVTFNPAHFDDFASAGPGAVSFWRIETQGTDTQ, GTAAELTSITYNSTSLLYSGCSTGQVCVWDCQTHRCFLT, EADQGEIGILLCRGNRLLTGSNTRRIRLWCVAAVQELRE, GHRNKVMDLAVAHGESHCATCGEDGSLRIWSLQSCELLLQ, VLNQ…MEMK, PHPCAVTSIAYSTSGDVLLTGGKDGQMAITSPRTGMTIRV, SPIT…DKCE, PLSHFATSLTLSPAASLIAVGSNERLLRLIDTSAGTKQDF, and AYDDGVHLCRVSPSGNLLLTASYNQVLVWDIQNS.

The protein belongs to the WD repeat WDR90/POC16 family.

The protein resides in the cytoplasm. The protein localises to the cytoskeleton. It is found in the microtubule organizing center. It localises to the centrosome. Its subcellular location is the centriole. The protein resides in the centriolar satellite. Its function is as follows. Microtubule-binding protein that plays a crucial role in ensuring inner core protein localization within the centriole core, as well as in maintaining the microtubule wall integrity and the overall centriole roundness and stability. Required for efficient primary cilium formation. The protein is WD repeat-containing protein 90 (wdr90) of Xenopus tropicalis (Western clawed frog).